The chain runs to 164 residues: Peptide deformylase-like (164 aa).

Glu134 is a catalytic residue.

This sequence belongs to the polypeptide deformylase family.

The sequence is that of Peptide deformylase-like from Brucella melitensis biotype 1 (strain ATCC 23456 / CCUG 17765 / NCTC 10094 / 16M).